We begin with the raw amino-acid sequence, 362 residues long: Fe-S cluster assembly protein DRE2 (362 aa).

Residues 1–28 form a disordered region; it reads MAPGLDLTPDFHPPTTTTTTTNNAPPQQ. Residues 15-28 show a composition bias toward low complexity; that stretch reads TTTTTTTNNAPPQQ. The N-terminal SAM-like domain stretch occupies residues 24-165; sequence APPQQRTLLL…KPEYAEEEAV (142 aa). The tract at residues 166–254 is linker; that stretch reads PLRFGKKKAA…EETLLTEEDL (89 aa). 4 residues coordinate [2Fe-2S] cluster: Cys-264, Cys-275, Cys-278, and Cys-280. The segment at 264–280 is fe-S binding site A; the sequence is CQPQPGKKRRACKDCTC. 4 residues coordinate [4Fe-4S] cluster: Cys-325, Cys-328, Cys-336, and Cys-339. 2 consecutive short sequence motifs (cx2C motif) follow at residues 325–328 and 336–339; these read CGSC and CSDC. The interval 325 to 339 is fe-S binding site B; sequence CGSCYLGDAFRCSDC.

This sequence belongs to the anamorsin family. As to quaternary structure, monomer. Interacts with TAH18. Interacts with MIA40. The cofactor is [2Fe-2S] cluster. [4Fe-4S] cluster serves as cofactor.

It is found in the cytoplasm. The protein resides in the mitochondrion intermembrane space. In terms of biological role, component of the cytosolic iron-sulfur (Fe-S) protein assembly (CIA) machinery required for the maturation of extramitochondrial Fe-S proteins. Part of an electron transfer chain functioning in an early step of cytosolic Fe-S biogenesis, facilitating the de novo assembly of a [4Fe-4S] cluster on the scaffold complex CFD1-NBP35. Electrons are transferred to DRE2 from NADPH via the FAD- and FMN-containing protein TAH18. TAH18-DRE2 are also required for the assembly of the diferric tyrosyl radical cofactor of ribonucleotide reductase (RNR), probably by providing electrons for reduction during radical cofactor maturation in the catalytic small subunit RNR2. The protein is Fe-S cluster assembly protein DRE2 of Chaetomium globosum (strain ATCC 6205 / CBS 148.51 / DSM 1962 / NBRC 6347 / NRRL 1970) (Soil fungus).